The following is a 34-amino-acid chain: ECRWFLGGCSGGQTCCEHLVCHRKHQWCVWDWSF.

Disulfide bonds link Cys-2–Cys-16, Cys-9–Cys-21, and Cys-15–Cys-28. Phenylalanine amide is present on Phe-34.

This sequence belongs to the neurotoxin 10 (Hwtx-1) family. 54 (ProTx-1) subfamily. In terms of processing, C-terminal amidation is important for the high potency of the toxin. In terms of tissue distribution, expressed by the venom gland.

Its subcellular location is the secreted. Functionally, inhibits sodium channel Nav1.7/SCN9A with high potency (IC(50)=117 nM) and Nav1.2/SCN2A, Nav1.3/SCN3A, Nav1.6/SCN8A and Nav1.5/SCN5 with weaker potency. Also inhibits voltage-gated calcium channel Cav3.1/CACNA1G, Cav3.2/CACNA1H and Cav3.3/CACNA1I. The polypeptide is Mu-theraphotoxin-Df1a (Davus fasciatus (Costa Rican tiger rump)).